The primary structure comprises 538 residues: Chaperonin GroEL (538 aa).

ATP is bound by residues threonine 30–proline 33, aspartate 87–threonine 91, glycine 415, aspartate 479–alanine 481, and aspartate 495.

It belongs to the chaperonin (HSP60) family. As to quaternary structure, forms a cylinder of 14 subunits composed of two heptameric rings stacked back-to-back. Interacts with the co-chaperonin GroES.

Its subcellular location is the cytoplasm. It carries out the reaction ATP + H2O + a folded polypeptide = ADP + phosphate + an unfolded polypeptide.. Its function is as follows. Together with its co-chaperonin GroES, plays an essential role in assisting protein folding. The GroEL-GroES system forms a nano-cage that allows encapsulation of the non-native substrate proteins and provides a physical environment optimized to promote and accelerate protein folding. The protein is Chaperonin GroEL of Dictyoglomus thermophilum (strain ATCC 35947 / DSM 3960 / H-6-12).